The primary structure comprises 198 residues: NADH-quinone oxidoreductase subunit C (198 aa).

This sequence belongs to the complex I 30 kDa subunit family. In terms of assembly, NDH-1 is composed of 14 different subunits. Subunits NuoB, C, D, E, F, and G constitute the peripheral sector of the complex.

It localises to the cell inner membrane. It catalyses the reaction a quinone + NADH + 5 H(+)(in) = a quinol + NAD(+) + 4 H(+)(out). NDH-1 shuttles electrons from NADH, via FMN and iron-sulfur (Fe-S) centers, to quinones in the respiratory chain. The immediate electron acceptor for the enzyme in this species is believed to be ubiquinone. Couples the redox reaction to proton translocation (for every two electrons transferred, four hydrogen ions are translocated across the cytoplasmic membrane), and thus conserves the redox energy in a proton gradient. The sequence is that of NADH-quinone oxidoreductase subunit C from Chromobacterium violaceum (strain ATCC 12472 / DSM 30191 / JCM 1249 / CCUG 213 / NBRC 12614 / NCIMB 9131 / NCTC 9757 / MK).